The chain runs to 122 residues: Basic phospholipase A2 homolog (122 aa).

7 disulfides stabilise this stretch: C26–C116, C28–C44, C43–C96, C49–C122, C50–C89, C57–C82, and C75–C87. An important for membrane-damaging activities in eukaryotes and bacteria; heparin-binding region spans residues 106-117; that stretch reads KKHRVTVKFLCK.

The protein belongs to the phospholipase A2 family. Group II subfamily. K49 sub-subfamily. Homodimer; non-covalently linked. In terms of tissue distribution, expressed by the venom gland.

It localises to the secreted. Functionally, snake venom phospholipase A2 (PLA2) that has almost no phospholipase A2 activity. Is myotoxic. Displays edema-inducing activities. A model of myotoxic mechanism has been proposed: an apo Lys49-PLA2 is activated by the entrance of a hydrophobic molecule (e.g. fatty acid) at the hydrophobic channel of the protein leading to a reorientation of a monomer. This reorientation causes a transition between 'inactive' to 'active' states, causing alignment of C-terminal and membrane-docking sites (MDoS) side-by-side and putting the membrane-disruption sites (MDiS) in the same plane, exposed to solvent and in a symmetric position for both monomers. The MDoS region stabilizes the toxin on membrane by the interaction of charged residues with phospholipid head groups. Subsequently, the MDiS region destabilizes the membrane with penetration of hydrophobic residues. This insertion causes a disorganization of the membrane, allowing an uncontrolled influx of ions (i.e. calcium and sodium), and eventually triggering irreversible intracellular alterations and cell death. This Protobothrops mucrosquamatus (Taiwan habu) protein is Basic phospholipase A2 homolog.